Reading from the N-terminus, the 154-residue chain is Large ribosomal subunit protein uL13 (154 aa).

The protein belongs to the universal ribosomal protein uL13 family. In terms of assembly, part of the 50S ribosomal subunit.

Its function is as follows. This protein is one of the early assembly proteins of the 50S ribosomal subunit, although it is not seen to bind rRNA by itself. It is important during the early stages of 50S assembly. In Bradyrhizobium diazoefficiens (strain JCM 10833 / BCRC 13528 / IAM 13628 / NBRC 14792 / USDA 110), this protein is Large ribosomal subunit protein uL13.